A 422-amino-acid polypeptide reads, in one-letter code: Testin (422 aa).

Residues 92 to 199 form the PET domain; the sequence is MILTNPVPAK…GDVKLPGELE (108 aa). The segment at 198–224 is disordered; it reads LETKATDKNNVNSGDRSTSAAVGAMED. The span at 205–217 shows a compositional bias: polar residues; that stretch reads KNNVNSGDRSTSA. 3 LIM zinc-binding domains span residues 234–297, 299–359, and 362–422; these read YSCY…CDSE, PRCA…KHAA, and QGCH…KMMS.

This sequence belongs to the prickle / espinas / testin family.

The protein resides in the cytoplasm. The protein localises to the cell junction. Its subcellular location is the focal adhesion. In terms of biological role, scaffold protein that may play a role in cell adhesion, cell spreading and in the reorganization of the actin cytoskeleton. May play a role in the regulation of cell proliferation. May inhibit cell growth. The sequence is that of Testin (TES) from Gallus gallus (Chicken).